The primary structure comprises 214 residues: MEPAREPPSRARPPPPLAARPAPAPAAPRPRSPAEAEARGPEGLLRRSGSGYEGSTSWKAALEDTTTRLLLGAIAVLLFAILVVMSILASKGCIKCEAPCPEDWLLYGRKCYFFSEEPRDWNTGRQYCHTHEAVLAVIQSQKELEFMFKFTRREPWIGLRRVGDEFHWVNGDPFDPDTFTIAGPGECVFVEPTRLVSTECLMTRPWVCSKMAYT.

The segment at 1–56 is disordered; it reads MEPAREPPSRARPPPPLAARPAPAPAAPRPRSPAEAEARGPEGLLRRSGSGYEGST. Over residues 10–31 the composition is skewed to pro residues; the sequence is RARPPPPLAARPAPAPAAPRPR. S32 carries the phosphoserine modification. Residues 69-89 form a helical membrane-spanning segment; that stretch reads LLLGAIAVLLFAILVVMSILA. The C-type lectin domain maps to 107–209; the sequence is YGRKCYFFSE…CLMTRPWVCS (103 aa). Disulfide bonds link C128–C208 and C187–C200.

The protein localises to the membrane. This chain is C-type lectin domain family 2 member L (CLEC2L), found in Homo sapiens (Human).